Reading from the N-terminus, the 224-residue chain is MLIEIPNVFSKEEVNQLREQLDARTWIDGNQTSGVMASTRKRNQQLDKDDPVALQIGELIMARLLAHPLFVSAALPLQFYPPLFNRYQGGETFGYHIDNAIRSTSEGMVRTDLSATLFLSEPDTYQGGELVIQDTYGQQSIKLAAGSLVLYPSTSLHQVTPVTSGERTAAFMWLQSMVRDEGQRRLLFQLDQSIQSLTAQAAPEQELFNLTGVYHNLLRRWSEL.

The region spanning 78–176 (QFYPPLFNRY…RTAAFMWLQS (99 aa)) is the Fe2OG dioxygenase domain. Fe cation-binding residues include histidine 96, aspartate 98, and histidine 157. Arginine 167 contacts 2-oxoglutarate.

The cofactor is Fe(2+). L-ascorbate is required as a cofactor.

This is PKHD-type hydroxylase Shewana3_0717 from Shewanella sp. (strain ANA-3).